The chain runs to 465 residues: Cysteine--tRNA ligase (465 aa).

Position 27 (cysteine 27) interacts with Zn(2+). The short motif at 29 to 39 (PTVYNFFHIGN) is the 'HIGH' region element. Zn(2+) is bound by residues cysteine 207, histidine 232, and glutamate 236. The short motif at 264–268 (KMSKS) is the 'KMSKS' region element. Lysine 267 contacts ATP.

The protein belongs to the class-I aminoacyl-tRNA synthetase family. In terms of assembly, monomer. Zn(2+) is required as a cofactor.

The protein localises to the cytoplasm. The catalysed reaction is tRNA(Cys) + L-cysteine + ATP = L-cysteinyl-tRNA(Cys) + AMP + diphosphate. This Clostridium kluyveri (strain NBRC 12016) protein is Cysteine--tRNA ligase.